We begin with the raw amino-acid sequence, 449 residues long: Na(+)/H(+) antiporter NhaA (449 aa).

The next 12 helical transmembrane spans lie at 30–50 (IFLI…WAGA), 69–89 (FGLT…FLVA), 112–132 (LLAA…LNLG), 138–158 (GWGI…GLLG), 168–188 (FLIA…ALFY), 192–212 (LSWI…LMNW), 218–238 (LIWY…SGIH), 241–261 (IAGV…SKIL), 312–332 (SLVD…NAGV), 348–368 (LGIL…FTLI), 386–406 (IIGI…ITNL), and 419–439 (ISIL…LLLT).

It belongs to the NhaA Na(+)/H(+) (TC 2.A.33) antiporter family.

It is found in the cell inner membrane. The catalysed reaction is Na(+)(in) + 2 H(+)(out) = Na(+)(out) + 2 H(+)(in). Na(+)/H(+) antiporter that extrudes sodium in exchange for external protons. This is Na(+)/H(+) antiporter NhaA from Christiangramia forsetii (strain DSM 17595 / CGMCC 1.15422 / KT0803) (Gramella forsetii).